The chain runs to 5207 residues: NBPF family member NBPF20 (5207 aa).

64 Olduvai domains span residues 5–77, 80–135, 136–228, 229–321, 324–379, 380–472, 473–565, 568–623, 624–716, 717–809, 812–867, 868–960, 961–1053, 1056–1111, 1112–1204, 1205–1297, 1300–1355, 1356–1448, 1449–1541, 1544–1599, 1600–1692, 1693–1785, 1788–1843, 1844–1936, 1937–2029, 2032–2087, 2088–2180, 2181–2273, 2276–2331, 2332–2424, 2425–2517, 2520–2575, 2576–2668, 2669–2761, 2764–2819, 2820–2912, 2913–3005, 3008–3063, 3064–3156, 3157–3249, 3252–3307, 3308–3400, 3401–3493, 3496–3551, 3552–3644, 3645–3737, 3740–3795, 3796–3888, 3889–3981, 3984–4039, 4040–4132, 4133–4225, 4228–4283, 4284–4376, 4377–4452, 4453–4545, 4546–4621, 4622–4713, 4716–4771, 4772–4864, 4865–4957, 4960–5015, 5016–5108, and 5109–5207; these read SREL…PSCP, SREL…LDVD, RTKK…RSKK, ERRR…PSCP, ERRR…LDVD, RTKK…PSCP, and KRRR…IFPQ. 2 disordered regions span residues 137-157 and 215-256; these read TKKD…LSRE and KGKG…LDEK. The segment covering 216 to 234 has biased composition (basic residues); it reads GKGKKRRGRRSKKERRRGR. 2 disordered regions span residues 381-403 and 459-513; these read TKKD…RELL and KGKG…DRSY. The segment covering 460 to 478 has biased composition (basic residues); that stretch reads GKGKKRRGRRSKKERRRGR. The segment covering 492–502 has biased composition (basic and acidic residues); the sequence is LSRELLDEKGP. Disordered regions lie at residues 625–647 and 703–744; these read TKKD…RELL and KGKG…LDEK. The segment covering 704–722 has biased composition (basic residues); it reads GKGKKRRGRRSKKERRRGR. Disordered regions lie at residues 869-891 and 947-1001; these read TKKD…RELL and KGKG…DRSY. Basic residues predominate over residues 948–966; that stretch reads GKGKKRRGRRSKKERRRGR. The segment covering 980–990 has biased composition (basic and acidic residues); sequence LSRELLDEKGP. 2 disordered regions span residues 1113-1135 and 1191-1245; these read TKKD…RELL and KGKG…DRSY. Positions 1192-1210 are enriched in basic residues; sequence GKGKKRRGRRSKKERRRGR. Basic and acidic residues predominate over residues 1224–1234; that stretch reads LSRELLDEKGP. 2 disordered regions span residues 1357 to 1379 and 1435 to 1489; these read TKKD…RELL and KGKG…DRSY. The span at 1436–1454 shows a compositional bias: basic residues; the sequence is GKGKKRRGRRSKKERRRGR. Over residues 1468-1478 the composition is skewed to basic and acidic residues; the sequence is LSRELLDEKGP. Disordered regions lie at residues 1601 to 1623 and 1679 to 1733; these read TKKD…RELL and KGKG…DRSY. Over residues 1680-1698 the composition is skewed to basic residues; it reads GKGKKRRGRRSKKERRRGR. Positions 1712-1722 are enriched in basic and acidic residues; that stretch reads LSRELLDEKGP. Disordered regions lie at residues 1845 to 1867 and 1923 to 1964; these read TKKD…RELL and KGKG…LDEK. Positions 1924–1942 are enriched in basic residues; the sequence is GKGKKRRGRRSKKERRRGR. Disordered stretches follow at residues 2089 to 2111 and 2167 to 2208; these read TKKD…RELL and KGKG…LDEK. The span at 2168 to 2186 shows a compositional bias: basic residues; it reads GKGKKRRGRRSKKERRRGR. Disordered regions lie at residues 2333–2355 and 2411–2452; these read TKKD…RELL and KGKG…LDEK. The segment covering 2412–2430 has biased composition (basic residues); that stretch reads GKGKKRRGRRSKKERRRGR. Disordered regions lie at residues 2577-2599 and 2655-2709; these read TKKD…RELL and KGKG…DRSY. The span at 2656–2674 shows a compositional bias: basic residues; sequence GKGKKRRGRRSKKERRRGR. Residues 2688 to 2698 show a composition bias toward basic and acidic residues; the sequence is LSRELLDEKGP. 2 disordered regions span residues 2821–2843 and 2899–2953; these read TKKD…RELL and KGKG…DRSY. Residues 2900–2918 show a composition bias toward basic residues; that stretch reads GKGKKRRGRRSKKERRRGR. Residues 2932 to 2942 are compositionally biased toward basic and acidic residues; it reads LSRELLDEKGP. Disordered regions lie at residues 3065–3087 and 3143–3197; these read TKKD…RELL and KGKG…DRSY. A compositionally biased stretch (basic residues) spans 3144–3162; sequence GKGKKRRGRRSKKERRRGR. The segment covering 3176–3186 has biased composition (basic and acidic residues); the sequence is LSRELLDEKGP. 2 disordered regions span residues 3309–3331 and 3387–3441; these read TKKD…RELL and KGKG…DRSY. A compositionally biased stretch (basic residues) spans 3388-3406; the sequence is GKGKKRRGRRSKKERRRGR. Basic and acidic residues predominate over residues 3420–3430; that stretch reads LSRELLDEKGP. Disordered regions lie at residues 3553-3575 and 3631-3672; these read TKKD…RELL and KGKG…LDEK. A compositionally biased stretch (basic residues) spans 3632–3650; the sequence is GKGKKRRGRRSKKERRRGR. 2 disordered regions span residues 3797-3819 and 3875-3916; these read TKKD…RELL and KGKG…LDEK. The segment covering 3876–3894 has biased composition (basic residues); that stretch reads GKGKKRRGRRSKKERRRGR. 2 disordered regions span residues 4041–4063 and 4119–4160; these read TKKD…RELL and KGKG…LDEK. Basic residues predominate over residues 4120 to 4138; it reads GKGKKRRGRRSKKERRRGR. Disordered stretches follow at residues 4285-4307, 4361-4404, 4453-4474, and 4530-4573; these read TKKD…RELL, EKKG…LDEK, and RTKK…LSRE. Positions 4364–4382 are enriched in basic residues; that stretch reads GKGKKRRGRRSKKERRRGR. Positions 4533–4551 are enriched in basic residues; that stretch reads GKGKKRRGRRSKKERRRGR. 2 disordered regions span residues 4773-4793 and 4851-4889; these read TKKD…LSRE and KGKG…RELL. Basic residues predominate over residues 4852-4870; the sequence is GKGKKRRGRRSKKERRRGR. Disordered regions lie at residues 5017 to 5037 and 5094 to 5128; these read TKKD…LSRE and KKGK…CPRL. Basic residues predominate over residues 5096–5114; it reads GKGKKRRGRRSKKKRRRGR.

Belongs to the NBPF family.

The protein resides in the cytoplasm. The sequence is that of NBPF family member NBPF20 from Homo sapiens (Human).